The primary structure comprises 299 residues: Ribosomal protein L11 methyltransferase (299 aa).

S-adenosyl-L-methionine-binding residues include Thr139, Gly166, Asp188, and Asn231.

This sequence belongs to the methyltransferase superfamily. PrmA family.

The protein localises to the cytoplasm. It catalyses the reaction L-lysyl-[protein] + 3 S-adenosyl-L-methionine = N(6),N(6),N(6)-trimethyl-L-lysyl-[protein] + 3 S-adenosyl-L-homocysteine + 3 H(+). Its function is as follows. Methylates ribosomal protein L11. The chain is Ribosomal protein L11 methyltransferase from Thermosynechococcus vestitus (strain NIES-2133 / IAM M-273 / BP-1).